We begin with the raw amino-acid sequence, 196 residues long: Putative NADH dehydrogenase/NAD(P)H nitroreductase Smal_0358 (196 aa).

Belongs to the nitroreductase family. HadB/RutE subfamily. The cofactor is FMN.

This is Putative NADH dehydrogenase/NAD(P)H nitroreductase Smal_0358 from Stenotrophomonas maltophilia (strain R551-3).